A 151-amino-acid chain; its full sequence is Ribosomal RNA large subunit methyltransferase H (151 aa).

S-adenosyl-L-methionine contacts are provided by residues Gly100 and 119–124 (LSRMTF).

Belongs to the RNA methyltransferase RlmH family. In terms of assembly, homodimer.

Its subcellular location is the cytoplasm. The catalysed reaction is pseudouridine(1915) in 23S rRNA + S-adenosyl-L-methionine = N(3)-methylpseudouridine(1915) in 23S rRNA + S-adenosyl-L-homocysteine + H(+). Specifically methylates the pseudouridine at position 1915 (m3Psi1915) in 23S rRNA. The sequence is that of Ribosomal RNA large subunit methyltransferase H from Thermotoga neapolitana (strain ATCC 49049 / DSM 4359 / NBRC 107923 / NS-E).